We begin with the raw amino-acid sequence, 1498 residues long: ATP-binding cassette sub-family C member 6 (1498 aa).

The Extracellular portion of the chain corresponds to 1–37 (MNRGRSMATPGEQCAGLRVWNQTEQEPAAYHLLSLCF). N21 is a glycosylation site (N-linked (GlcNAc...) asparagine). Residues 38 to 58 (VRAASSWVPPMYLWVLGPIYL) form a helical membrane-spanning segment. Residues 59 to 78 (LYIHRHGRCYLRMSHLFKTK) lie on the Cytoplasmic side of the membrane. The helical transmembrane segment at 79–99 (MVLGLALILLYTFNVAVPLWR) threads the bilayer. The Extracellular portion of the chain corresponds to 100–104 (IHQGV). The helical transmembrane segment at 105-125 (PQAPELLIHPTVWLTTMSFAT) threads the bilayer. Residues 126 to 137 (FLIHMERRKGVR) lie on the Cytoplasmic side of the membrane. The helical transmembrane segment at 138–155 (SSGVLFGYWLLCCILPGI) threads the bilayer. Over 156 to 173 (NTVQQASAGNFRQEPLHH) the chain is Extracellular. Residues 174-194 (LATYLCLSLVVAELVLSCLVD) form a helical membrane-spanning segment. Topologically, residues 195 to 300 (QPPFFSEDSQ…RSQRGPLLRA (106 aa)) are cytoplasmic. Residues 301–321 (IWRVFRSTFLLGTLSLVISDA) form a helical membrane-spanning segment. Residues 309–592 (FLLGTLSLVI…LPFSVHCIVQ (284 aa)) form the ABC transmembrane type-1 1 domain. At 322–347 (FRFAVPKLLSLFLEFMGDRNSSAWTG) the chain is on the extracellular side. The N-linked (GlcNAc...) asparagine glycan is linked to N341. Residues 348–368 (WLLAVLMFAAACLQTLFEQQH) form a helical membrane-spanning segment. Residues 369 to 424 (MYRAKVLQMRLRTAITGLVYRKVLVLSSGSRKSSAAGDVVNLVSVDIQRLAESIIY) lie on the Cytoplasmic side of the membrane. Residues 425–445 (LNGLWLLFLWIFVCFVYLWQL) form a helical membrane-spanning segment. Residues 446–448 (LGP) are Extracellular-facing. Residues 449–469 (SALTAVAVFLSLLPLNFFITK) form a helical membrane-spanning segment. At 470 to 531 (KRGFHQEEQM…ALKTSTLLFS (62 aa)) the chain is on the cytoplasmic side. A helical membrane pass occupies residues 532–552 (VSLVSFQVSTFLVALVVFAVH). Over 553-574 (TLVAEDNAMDAEKAFVTLTVLS) the chain is Extracellular. The chain crosses the membrane as a helical span at residues 575–595 (ILNKAQAFLPFSVHCIVQARV). At 596-934 (SFDRLAAFLC…VKTTIYLSYL (339 aa)) the chain is on the cytoplasmic side. One can recognise an ABC transporter 1 domain in the interval 627 to 851 (ISVHNGTFAW…NGALVGLLDG (225 aa)). 661–668 (GPVGAGKS) is a binding site for ATP. A disordered region spans residues 855-910 (PAGTHDAATSDDLGGFPGGGRPTCRPDRPRPTEAAPVKGRSTSEVQMEASLDDPEA). A helical transmembrane segment spans residues 935 to 955 (RAVGTPLCTYTLFLFLCQQVA). The region spanning 942–1223 (CTYTLFLFLC…VVRSWTDLEN (282 aa)) is the ABC transmembrane type-1 2 domain. The Extracellular segment spans residues 956 to 992 (SFSQGYWLSLWADDPVVDGRQMHAALRGWVFGLLGCL). The helical transmembrane segment at 993–1013 (QAIGLFASMAAVFLGGARASG) threads the bilayer. Topologically, residues 1014 to 1056 (LLFRSLLWDVARSPIGFFERTPVGNLLNRFSKETDTVDVDIPD) are cytoplasmic. Residues 1057 to 1077 (KLRSLLTYAFGLLEVGLAVTM) form a helical membrane-spanning segment. A1078 is a topological domain (extracellular). A helical transmembrane segment spans residues 1079–1099 (TPLAIVAILPLMVLYAGFQSL). At 1100–1170 (YVATSCQLRR…VADRWLATNL (71 aa)) the chain is on the cytoplasmic side. A helical transmembrane segment spans residues 1171-1191 (ELLGNGLVFVAATCAVLSKAH). The Extracellular segment spans residues 1192 to 1193 (LS). The chain crosses the membrane as a helical span at residues 1194–1214 (AGLVGFSVSAALQVTQTLQWV). Over 1215–1498 (VRSWTDLENS…YRLAHESGLA (284 aa)) the chain is Cytoplasmic. An ABC transporter 2 domain is found at 1260 to 1494 (IEFRDFGLRH…KGLFYRLAHE (235 aa)). Phosphoserine is present on S1281. ATP is bound at residue 1294-1301 (GRTGAGKS).

The protein belongs to the ABC transporter superfamily. ABCC family. Conjugate transporter (TC 3.A.1.208) subfamily. In terms of processing, glycosylated.

The protein localises to the basolateral cell membrane. The protein resides in the basal cell membrane. It catalyses the reaction an S-substituted glutathione(in) + ATP + H2O = an S-substituted glutathione(out) + ADP + phosphate + H(+). It carries out the reaction leukotriene C4(in) + ATP + H2O = leukotriene C4(out) + ADP + phosphate + H(+). ATP-dependent transporter of the ATP-binding cassette (ABC) family that actively extrudes physiological compounds, and xenobiotics from cells. Mediates ATP-dependent transport of glutathione conjugates such as leukotriene-c4 (LTC4) and N-ethylmaleimide S-glutathione (NEM-GS) (in vitro), and an anionic cyclopentapeptide endothelin antagonist, BQ-123. May contribute to regulate the transport of organic compounds in testes across the blood-testis-barrier. Its function is as follows. Mediates the release of nucleoside triphosphates, predominantly ATP, into the circulation, where it is rapidly converted into AMP and the mineralization inhibitor inorganic pyrophosphate (PPi) by the ecto-enzyme ectonucleotide pyrophosphatase phosphodiesterase 1 (ENPP1), therefore playing a role in PPi homeostasis. The chain is ATP-binding cassette sub-family C member 6 (Abcc6) from Mus musculus (Mouse).